The following is a 264-amino-acid chain: Taurine import ATP-binding protein TauB (264 aa).

The region spanning 4–233 (LQLERISAQY…RYAAGESARA (230 aa)) is the ABC transporter domain. 38–45 (GPSGSGKT) lines the ATP pocket.

This sequence belongs to the ABC transporter superfamily. Taurine importer (TC 3.A.1.17.1) family. In terms of assembly, the complex is composed of two ATP-binding proteins (TauB), two transmembrane proteins (TauC) and a solute-binding protein (TauA).

Its subcellular location is the cell inner membrane. The catalysed reaction is taurine(out) + ATP + H2O = taurine(in) + ADP + phosphate + H(+). Functionally, part of the ABC transporter complex TauABC involved in taurine import. Responsible for energy coupling to the transport system. In Pseudomonas fluorescens (strain ATCC BAA-477 / NRRL B-23932 / Pf-5), this protein is Taurine import ATP-binding protein TauB.